We begin with the raw amino-acid sequence, 883 residues long: Leucine--tRNA ligase (883 aa).

The 'HIGH' region signature appears at 43-53 (PYPSGRIHIGH). Residues 630-634 (KMSKS) carry the 'KMSKS' region motif. An ATP-binding site is contributed by Lys633.

Belongs to the class-I aminoacyl-tRNA synthetase family.

It is found in the cytoplasm. The enzyme catalyses tRNA(Leu) + L-leucine + ATP = L-leucyl-tRNA(Leu) + AMP + diphosphate. This chain is Leucine--tRNA ligase, found in Nitrobacter winogradskyi (strain ATCC 25391 / DSM 10237 / CIP 104748 / NCIMB 11846 / Nb-255).